A 734-amino-acid chain; its full sequence is Platelet glycoprotein Ib alpha chain (734 aa).

An N-terminal signal peptide occupies residues 1 to 16; the sequence is MALLILLFLLPSPLHS. One can recognise an LRRNT domain in the interval 17–47; sequence QHTCSISKVTSLLEVNCENKKLTALPADLPA. The Extracellular portion of the chain corresponds to 17-612; it reads QHTCSISKVT…LNSDFCCFLP (596 aa). Cysteine 20 and cysteine 33 form a disulfide bridge. LRR repeat units lie at residues 48 to 69, 72 to 93, 94 to 115, 117 to 140, 141 to 162, 165 to 188, and 189 to 210; these read DTGILHLGENQLGTFSTASLVH, HLTYLYLDRCELTSLQTNGKLI, KLENLDLSHNNLKSLPSLGWAL, ALTTLDVSFNKLGSLSPGVLDGLS, QLQELYLQNNDLKSLPPGLLLP, KLKKLNLANNKLRELPSGLLDGLE, and DLDTLYLQRNWLRTIPKGFFGT. Residues 221-282 enclose the LRRCT domain; that stretch reads NSWYCDCEIL…YSYPGKGCPT (62 aa). 2 disulfides stabilise this stretch: cysteine 225–cysteine 264 and cysteine 227–cysteine 280. Residue tyrosine 292 is modified to Sulfotyrosine. 4 O-linked (GalNAc...) threonine glycosylation sites follow: threonine 301, threonine 311, threonine 315, and threonine 316. The O-linked (GalNAc...) serine glycan is linked to serine 335. 4 O-linked (GalNAc...) threonine glycosylation sites follow: threonine 339, threonine 348, threonine 358, and threonine 377. Residue serine 382 is glycosylated (O-linked (GalNAc...) serine). O-linked (GalNAc...) threonine glycosylation is found at threonine 384, threonine 385, and threonine 405. Disordered stretches follow at residues 406 to 429 and 460 to 526; these read STLTTPEHSTTPVPTTTILTTPEH and EPST…PEPS. 8 O-linked (GalNAc...) threonine glycosylation sites follow: threonine 512, threonine 516, threonine 519, threonine 530, threonine 542, threonine 546, threonine 550, and threonine 562. A glycan (O-linked (GalNAc...) serine) is linked at serine 572. Threonine 573 carries O-linked (GalNAc...) threonine glycosylation. Residues 613-633 form a helical membrane-spanning segment; sequence LGFYVLGLLWLLFASVVLILL. Topologically, residues 634–734 are cytoplasmic; it reads LTWTWHVTPH…VGIRYSGHSL (101 aa). Phosphoserine is present on residues serine 711 and serine 714.

As to quaternary structure, two GP-Ib beta are disulfide-linked to one GP-Ib alpha. GP-IX is complexed with the GP-Ib heterodimer via a non covalent linkage. Interacts with FLNB. Interacts with FLNA (via filamin repeats 4, 9, 12, 17, 19, 21, and 23). O-glycosylated. In terms of processing, glycocalicin is the product of a proteolytic cleavage/shedding, catalyzed by ADAM17, which releases most of the extracellular domain. Binding sites for vWF and thrombin are in this part of the protein.

Its subcellular location is the membrane. Its function is as follows. GP-Ib, a surface membrane protein of platelets, participates in the formation of platelet plugs by binding to the A1 domain of vWF, which is already bound to the subendothelium. In Mus musculus (Mouse), this protein is Platelet glycoprotein Ib alpha chain (Gp1ba).